A 400-amino-acid polypeptide reads, in one-letter code: MNITGIITEYNPLHKGHIYHINKTKELTSCDGIVCIMSGNFVQRGIPAIMDKWTRCELALNSGVDLVIELPSVYSLSSAEFFAYGSISLLNSIGIINNICFGSESGNIDDIKSIAKILNNEPSEFKNHLKDYLDKGVSYPVARSKALVEYFNDNLETQEILKSSNNILGIEYCKSLLKLKSTIIPYTIQRKGSNYNDDKLESKFSSATAIRSHVKNSKNINILKDILPSKTFNYLYDKFNNNNLVFEDSMFSFIKYKSLTLKNKLENLPDVKEGLHNKIYSELKNSNSFYELVSNIKSKRYAYTRISRILCQYFIGMENFNLEYLRTKKSPYGRVLGFNDTGRKILKEMKKKSSIPIYMKLPKTLNDTLKLDIQSTYAYSMINKSVSYDSDFKTSPIYLK.

Residues 7 to 20 (ITEYNPLHKGHIYH), Gly-102, Asn-165, and Arg-190 contribute to the ATP site.

The protein belongs to the TmcAL family.

It is found in the cytoplasm. It catalyses the reaction cytidine(34) in elongator tRNA(Met) + acetate + ATP = N(4)-acetylcytidine(34) in elongator tRNA(Met) + AMP + diphosphate. In terms of biological role, catalyzes the formation of N(4)-acetylcytidine (ac(4)C) at the wobble position of elongator tRNA(Met), using acetate and ATP as substrates. First activates an acetate ion to form acetyladenylate (Ac-AMP) and then transfers the acetyl group to tRNA to form ac(4)C34. This chain is tRNA(Met) cytidine acetate ligase, found in Clostridium novyi (strain NT).